We begin with the raw amino-acid sequence, 220 residues long: NADH-quinone oxidoreductase subunit I (220 aa).

4Fe-4S ferredoxin-type domains follow at residues 71–102 (LQRL…IITH) and 112–141 (DSYT…MGNR). [4Fe-4S] cluster is bound by residues C82, C85, C88, C92, C121, C124, C127, and C131. Residues 187-220 (MQATPLDYVQEPSKEESKEETPTNPESNKGDENV) are disordered. A compositionally biased stretch (basic and acidic residues) spans 198 to 207 (PSKEESKEET).

This sequence belongs to the complex I 23 kDa subunit family. As to quaternary structure, NDH-1 is composed of 14 different subunits. Subunits NuoA, H, J, K, L, M, N constitute the membrane sector of the complex. The cofactor is [4Fe-4S] cluster.

The protein resides in the cell inner membrane. It catalyses the reaction a quinone + NADH + 5 H(+)(in) = a quinol + NAD(+) + 4 H(+)(out). NDH-1 shuttles electrons from NADH, via FMN and iron-sulfur (Fe-S) centers, to quinones in the respiratory chain. The immediate electron acceptor for the enzyme in this species is believed to be ubiquinone. Couples the redox reaction to proton translocation (for every two electrons transferred, four hydrogen ions are translocated across the cytoplasmic membrane), and thus conserves the redox energy in a proton gradient. This Helicobacter pylori (strain HPAG1) protein is NADH-quinone oxidoreductase subunit I.